Here is a 76-residue protein sequence, read N- to C-terminus: Acyl carrier protein (76 aa).

One can recognise a Carrier domain in the interval 1–76 (MATFDKVKDI…DVVNYIEQNQ (76 aa)). The residue at position 36 (Ser36) is an O-(pantetheine 4'-phosphoryl)serine.

This sequence belongs to the acyl carrier protein (ACP) family. 4'-phosphopantetheine is transferred from CoA to a specific serine of apo-ACP by AcpS. This modification is essential for activity because fatty acids are bound in thioester linkage to the sulfhydryl of the prosthetic group.

It localises to the cytoplasm. Its pathway is lipid metabolism; fatty acid biosynthesis. Carrier of the growing fatty acid chain in fatty acid biosynthesis. The polypeptide is Acyl carrier protein (Natranaerobius thermophilus (strain ATCC BAA-1301 / DSM 18059 / JW/NM-WN-LF)).